Reading from the N-terminus, the 525-residue chain is GMP synthase [glutamine-hydrolyzing] (525 aa).

The Glutamine amidotransferase type-1 domain occupies 9–207 (RILILDFGSQ…VLDVCQCEAL (199 aa)). Cysteine 86 acts as the Nucleophile in catalysis. Active-site residues include histidine 181 and glutamate 183. The region spanning 208–400 (WTPASIIEDT…LGLPYDMLNR (193 aa)) is the GMPS ATP-PPase domain. Residue 235–241 (SGGVDSS) participates in ATP binding.

As to quaternary structure, homodimer.

It catalyses the reaction XMP + L-glutamine + ATP + H2O = GMP + L-glutamate + AMP + diphosphate + 2 H(+). It functions in the pathway purine metabolism; GMP biosynthesis; GMP from XMP (L-Gln route): step 1/1. Functionally, catalyzes the synthesis of GMP from XMP. The sequence is that of GMP synthase [glutamine-hydrolyzing] from Photorhabdus laumondii subsp. laumondii (strain DSM 15139 / CIP 105565 / TT01) (Photorhabdus luminescens subsp. laumondii).